Here is a 321-residue protein sequence, read N- to C-terminus: Lipoyl synthase (321 aa).

[4Fe-4S] cluster is bound by residues C68, C73, C79, C94, C98, C101, and S308. The Radical SAM core domain occupies 80–297 (FNHGTATFMI…KAEAMAMGFT (218 aa)).

The protein belongs to the radical SAM superfamily. Lipoyl synthase family. Requires [4Fe-4S] cluster as cofactor.

The protein resides in the cytoplasm. It catalyses the reaction [[Fe-S] cluster scaffold protein carrying a second [4Fe-4S](2+) cluster] + N(6)-octanoyl-L-lysyl-[protein] + 2 oxidized [2Fe-2S]-[ferredoxin] + 2 S-adenosyl-L-methionine + 4 H(+) = [[Fe-S] cluster scaffold protein] + N(6)-[(R)-dihydrolipoyl]-L-lysyl-[protein] + 4 Fe(3+) + 2 hydrogen sulfide + 2 5'-deoxyadenosine + 2 L-methionine + 2 reduced [2Fe-2S]-[ferredoxin]. The protein operates within protein modification; protein lipoylation via endogenous pathway; protein N(6)-(lipoyl)lysine from octanoyl-[acyl-carrier-protein]: step 2/2. Functionally, catalyzes the radical-mediated insertion of two sulfur atoms into the C-6 and C-8 positions of the octanoyl moiety bound to the lipoyl domains of lipoate-dependent enzymes, thereby converting the octanoylated domains into lipoylated derivatives. This chain is Lipoyl synthase, found in Klebsiella pneumoniae (strain 342).